The primary structure comprises 264 residues: GTP cyclohydrolase FolE2 (264 aa).

It belongs to the GTP cyclohydrolase IV family.

It carries out the reaction GTP + H2O = 7,8-dihydroneopterin 3'-triphosphate + formate + H(+). Its pathway is cofactor biosynthesis; 7,8-dihydroneopterin triphosphate biosynthesis; 7,8-dihydroneopterin triphosphate from GTP: step 1/1. Converts GTP to 7,8-dihydroneopterin triphosphate. The polypeptide is GTP cyclohydrolase FolE2 (Ruthia magnifica subsp. Calyptogena magnifica).